The following is a 347-amino-acid chain: GDT1-like protein 2, chloroplastic (347 aa).

A chloroplast-targeting transit peptide spans 1–12; that stretch reads MATAISVGVAVP. Residues 70–97 are disordered; sequence EAGSHGEHLDSSATRDSNKPTKPPSGSR. The next 7 membrane-spanning stretches (helical) occupy residues 99–119, 124–144, 165–185, 196–216, 257–277, 299–319, and 327–347; these read PQSIAAVLLLCALASAFIVFF, SAVVAMLAKSGFTAAFTLIFV, ALVLLGSMAALSLMTIVSVII, FQTTLPIGEYAAIALLAFFGF, LTSPLEVLWKSFSLVFFAEWG, GAIAGHLVATFLAIVGGAFLA, and VGLIGGVLFLLFAVATFFGVF.

It belongs to the GDT1 family.

It is found in the plastid. Its subcellular location is the chloroplast membrane. The chain is GDT1-like protein 2, chloroplastic from Oryza sativa subsp. japonica (Rice).